The following is a 196-amino-acid chain: uncharacterized protein (196 aa).

The chain crosses the membrane as a helical span at residues 11 to 31; the sequence is ICGFLLVILTIGGVLGGVYLV.

Its subcellular location is the membrane. This is an uncharacterized protein from Mycoplasma genitalium (strain ATCC 33530 / DSM 19775 / NCTC 10195 / G37) (Mycoplasmoides genitalium).